Reading from the N-terminus, the 442-residue chain is HTH-type transcriptional regulator NorG (442 aa).

The HTH gntR-type domain occupies 2–46; that stretch reads KIPSQRQLAIQYNVNRVTIIKSIELLEAEGFIYTKVGSGTYVNDY. Positions 6–25 form a DNA-binding region, H-T-H motif; it reads QRQLAIQYNVNRVTIIKSIE. The residue at position 288 (K288) is an N6-(pyridoxal phosphate)lysine.

In the C-terminal section; belongs to the class-I pyridoxal-phosphate-dependent aminotransferase family. The cofactor is pyridoxal 5'-phosphate.

Functionally, positively regulates the expression of the NorB efflux pump and negatively regulates the expression of the AbcA efflux pump. Binds specifically to the promoters of norA, norB and norC and abcA genes. Could also have an aminotransferase activity. The protein is HTH-type transcriptional regulator NorG (norG) of Staphylococcus aureus (strain bovine RF122 / ET3-1).